A 91-amino-acid polypeptide reads, in one-letter code: Putative defensin-like protein 83 (91 aa).

A signal peptide spans 1-27 (MATNKFLSILLLSLMAFAAILLPMISG). 4 cysteine pairs are disulfide-bonded: Cys32–Cys71, Cys37–Cys57, Cys43–Cys69, and Cys47–Cys70.

This sequence belongs to the DEFL family.

It is found in the secreted. The chain is Putative defensin-like protein 83 (LCR46) from Arabidopsis thaliana (Mouse-ear cress).